Reading from the N-terminus, the 439-residue chain is D-inositol 3-phosphate glycosyltransferase (439 aa).

Histidine 21 contributes to the 1D-myo-inositol 3-phosphate binding site. Residues 27–28 (QP) and glycine 35 contribute to the UDP-N-acetyl-alpha-D-glucosamine site. Residues 32-37 (DAGGMN), lysine 90, tyrosine 123, threonine 147, and arginine 167 contribute to the 1D-myo-inositol 3-phosphate site. UDP-N-acetyl-alpha-D-glucosamine is bound by residues arginine 241, lysine 246, and glutamine 299. Residues tyrosine 308, arginine 309, and alanine 311 each coordinate Mg(2+). UDP-N-acetyl-alpha-D-glucosamine-binding residues include glutamate 321 and glutamate 329. Threonine 335 is a binding site for Mg(2+).

It belongs to the glycosyltransferase group 1 family. MshA subfamily. In terms of assembly, homodimer.

The enzyme catalyses 1D-myo-inositol 3-phosphate + UDP-N-acetyl-alpha-D-glucosamine = 1D-myo-inositol 2-acetamido-2-deoxy-alpha-D-glucopyranoside 3-phosphate + UDP + H(+). In terms of biological role, catalyzes the transfer of a N-acetyl-glucosamine moiety to 1D-myo-inositol 3-phosphate to produce 1D-myo-inositol 2-acetamido-2-deoxy-glucopyranoside 3-phosphate in the mycothiol biosynthesis pathway. The polypeptide is D-inositol 3-phosphate glycosyltransferase (Mycobacterium sp. (strain KMS)).